We begin with the raw amino-acid sequence, 326 residues long: Nucleotide sugar transporter SLC35D2 (326 aa).

The Extracellular segment spans residues 1–15 (MEEPNAAPLPSRLAR). A helical membrane pass occupies residues 16 to 36 (LLSALFYGTCSFLIVLVNKAL). Residues 37-41 (LTTYG) lie on the Cytoplasmic side of the membrane. A helical transmembrane segment spans residues 42-62 (FPSPIVLGIGQMATTIMILYV). Topologically, residues 63-130 (FKLNKIIHFP…LLEAIILGTQ (68 aa)) are extracellular. The chain crosses the membrane as a helical span at residues 131–151 (YSLNIILSVLAIVLGAFIAAG). Topologically, residues 152 to 155 (SDLT) are cytoplasmic. A helical transmembrane segment spans residues 156-176 (FNLEGYVFVFLNDIFTAANGV). Topologically, residues 177–189 (YTKQKMDPKELGK) are extracellular. Residues 190 to 210 (YGVLFYNACFMLIPTVIISVS) form a helical membrane-spanning segment. Topologically, residues 211-225 (TGDFQQATEFRHWKN) are cytoplasmic. The helical transmembrane segment at 226–246 (VLFIIQFLLSCLLGFLLMYST) threads the bilayer. Topologically, residues 247 to 253 (ALCSYYN) are extracellular. The helical transmembrane segment at 254–276 (SALTTAVVGAIKNVSVAYIGMLV) threads the bilayer. Residues 277-280 (GGDY) are Cytoplasmic-facing. Residues 281–303 (IFSLLNFIGLNICMAGGLRYSFL) traverse the membrane as a helical segment. Over 304-326 (TLSSQLKPKQPVDEESIPLDLKS) the chain is Extracellular.

Belongs to the TPT transporter family. SLC35D subfamily.

It localises to the golgi apparatus membrane. It catalyses the reaction UMP(out) + UDP-N-acetyl-alpha-D-glucosamine(in) = UMP(in) + UDP-N-acetyl-alpha-D-glucosamine(out). The catalysed reaction is UMP(out) + UDP-alpha-D-glucose(in) = UMP(in) + UDP-alpha-D-glucose(out). Functionally, nucleotide sugar antiporter transporting UDP-N-acetylglucosamine (UDP-GlcNAc) and UDP-glucose (UDP-Glc) from the cytosol into the lumen of the Golgi in exchange of UMP. By supplying UDP-N-acetylglucosamine, a donor substrate to heparan sulfate synthases, probably takes part in the synthesis of these glycoconjugates. This Mus musculus (Mouse) protein is Nucleotide sugar transporter SLC35D2.